Reading from the N-terminus, the 536-residue chain is Phosphoenolpyruvate carboxykinase (ATP) (536 aa).

Substrate-binding residues include Arg-61, Tyr-195, and Lys-201. Residues Lys-201, His-220, and Gly-236–Thr-244 each bind ATP. The Mn(2+) site is built by Lys-201 and His-220. Mn(2+) is bound at residue Asp-257. ATP contacts are provided by Glu-285, Arg-322, and Thr-447. Arg-322 is a binding site for substrate.

Belongs to the phosphoenolpyruvate carboxykinase (ATP) family. The cofactor is Mn(2+).

The protein resides in the cytoplasm. It carries out the reaction oxaloacetate + ATP = phosphoenolpyruvate + ADP + CO2. Its pathway is carbohydrate biosynthesis; gluconeogenesis. Involved in the gluconeogenesis. Catalyzes the conversion of oxaloacetate (OAA) to phosphoenolpyruvate (PEP) through direct phosphoryl transfer between the nucleoside triphosphate and OAA. The polypeptide is Phosphoenolpyruvate carboxykinase (ATP) (Allorhizobium ampelinum (strain ATCC BAA-846 / DSM 112012 / S4) (Agrobacterium vitis (strain S4))).